A 674-amino-acid polypeptide reads, in one-letter code: ATP-citrate synthase subunit 1 (674 aa).

Residues 1 to 10 (MPSATSTNGA) are compositionally biased toward low complexity. The segment at 1-26 (MPSATSTNGANGNGNGNGASASPAPG) is disordered. ATP contacts are provided by residues 261–281 (LLRY…EVGG) and 312–338 (FKTE…KNKS). Glu-278 is a binding site for Mg(2+). His-320 serves as the catalytic Tele-phosphohistidine intermediate. 339 to 349 (MREAGFYVPDT) contributes to the CoA binding site.

Belongs to the succinate/malate CoA ligase alpha subunit family. Composed of two subunits.

It is found in the cytoplasm. It carries out the reaction oxaloacetate + acetyl-CoA + ADP + phosphate = citrate + ATP + CoA. In terms of biological role, catalyzes the formation of cytosolic acetyl-CoA, which is mainly used for the biosynthesis of fatty acids and sterols. This chain is ATP-citrate synthase subunit 1 (ACL1), found in Sordaria macrospora (strain ATCC MYA-333 / DSM 997 / K(L3346) / K-hell).